A 286-amino-acid chain; its full sequence is 4-hydroxybenzoate octaprenyltransferase (286 aa).

7 consecutive transmembrane segments (helical) span residues I22 to M42, L45 to I65, L98 to I118, F143 to A163, I213 to Q233, Y238 to L255, and N266 to I286.

It belongs to the UbiA prenyltransferase family. Mg(2+) serves as cofactor.

The protein resides in the cell inner membrane. It catalyses the reaction all-trans-octaprenyl diphosphate + 4-hydroxybenzoate = 4-hydroxy-3-(all-trans-octaprenyl)benzoate + diphosphate. Its pathway is cofactor biosynthesis; ubiquinone biosynthesis. Its function is as follows. Catalyzes the prenylation of para-hydroxybenzoate (PHB) with an all-trans polyprenyl group. Mediates the second step in the final reaction sequence of ubiquinone-8 (UQ-8) biosynthesis, which is the condensation of the polyisoprenoid side chain with PHB, generating the first membrane-bound Q intermediate 3-octaprenyl-4-hydroxybenzoate. The sequence is that of 4-hydroxybenzoate octaprenyltransferase from Histophilus somni (strain 129Pt) (Haemophilus somnus).